Consider the following 372-residue polypeptide: Cell division protein FtsZ 1 (372 aa).

GTP contacts are provided by residues 51–55 (GAGCN), 138–140 (GTG), glutamate 169, arginine 173, and aspartate 216. The tract at residues 351–372 (QEETPEPSEEEVPPVKIDIPEL) is disordered. Acidic residues predominate over residues 353 to 362 (ETPEPSEEEV).

It belongs to the FtsZ family. As to quaternary structure, homodimer. Polymerizes to form a dynamic ring structure in a strictly GTP-dependent manner. Interacts directly with several other division proteins.

It localises to the cytoplasm. Its function is as follows. Essential cell division protein that forms a contractile ring structure (Z ring) at the future cell division site. The regulation of the ring assembly controls the timing and the location of cell division. One of the functions of the FtsZ ring is to recruit other cell division proteins to the septum to produce a new cell wall between the dividing cells. Binds GTP and shows GTPase activity. This is Cell division protein FtsZ 1 from Pyrococcus abyssi (strain GE5 / Orsay).